The sequence spans 106 residues: Iron-sulfur cluster assembly protein CyaY (106 aa).

The protein belongs to the frataxin family.

In terms of biological role, involved in iron-sulfur (Fe-S) cluster assembly. May act as a regulator of Fe-S biogenesis. In Escherichia coli O139:H28 (strain E24377A / ETEC), this protein is Iron-sulfur cluster assembly protein CyaY.